A 109-amino-acid polypeptide reads, in one-letter code: Antifungal protein ginkbilobin-like protein (109 aa).

One can recognise a Gnk2-homologous domain in the interval 4–109; that stretch reads TNFVSSACNT…CFIQYEQHSF (106 aa). 3 disulfide bridges follow: Cys-11–Cys-87, Cys-63–Cys-72, and Cys-75–Cys-100. Asn-12 lines the alpha-D-mannopyranose pocket. Alpha-D-mannopyranose contacts are provided by Arg-94 and Glu-105.

In terms of biological role, exerts antifungal activity through its carbohydrate-binding specificity. In Picea abies (Norway spruce), this protein is Antifungal protein ginkbilobin-like protein.